A 256-amino-acid polypeptide reads, in one-letter code: Probable cyclic nucleotide phosphodiesterase Fisuc_1441/FSU_1912 (256 aa).

Residues aspartate 20, histidine 22, aspartate 59, asparagine 89, histidine 156, histidine 196, and histidine 198 each coordinate Fe cation. AMP contacts are provided by residues histidine 22, aspartate 59, and 89-90; that span reads NH. Histidine 198 serves as a coordination point for AMP.

The protein belongs to the cyclic nucleotide phosphodiesterase class-III family. Requires Fe(2+) as cofactor.

The polypeptide is Probable cyclic nucleotide phosphodiesterase Fisuc_1441/FSU_1912 (Fibrobacter succinogenes (strain ATCC 19169 / S85)).